The sequence spans 570 residues: Urease subunit alpha 1 (570 aa).

Positions 131–570 (GGIDTHVHFI…VPMAQRYFLF (440 aa)) constitute a Urease domain. The Ni(2+) site is built by histidine 136, histidine 138, and lysine 219. An N6-carboxylysine modification is found at lysine 219. Histidine 221 contacts substrate. The Ni(2+) site is built by histidine 248 and histidine 274. Histidine 322 serves as the catalytic Proton donor. A Ni(2+)-binding site is contributed by aspartate 362.

The protein belongs to the metallo-dependent hydrolases superfamily. Urease alpha subunit family. Heterotrimer of UreA (gamma), UreB (beta) and UreC (alpha) subunits. Three heterotrimers associate to form the active enzyme. Ni cation serves as cofactor. In terms of processing, carboxylation allows a single lysine to coordinate two nickel ions.

It localises to the cytoplasm. The catalysed reaction is urea + 2 H2O + H(+) = hydrogencarbonate + 2 NH4(+). It functions in the pathway nitrogen metabolism; urea degradation; CO(2) and NH(3) from urea (urease route): step 1/1. Its function is as follows. May protect brucellae during their passage through the stomach. The major route of infection in human brucellosis is oral. The chain is Urease subunit alpha 1 from Brucella abortus (strain 2308).